The chain runs to 340 residues: DNA primase large subunit PriL (340 aa).

Residues Cys229, Cys301, Cys310, and Cys318 each contribute to the [4Fe-4S] cluster site.

This sequence belongs to the eukaryotic-type primase large subunit family. As to quaternary structure, heterodimer of a small subunit (PriS) and a large subunit (PriL). Requires [4Fe-4S] cluster as cofactor.

In terms of biological role, regulatory subunit of DNA primase, an RNA polymerase that catalyzes the synthesis of short RNA molecules used as primers for DNA polymerase during DNA replication. Stabilizes and modulates the activity of the small subunit, increasing the rate of DNA synthesis, and conferring RNA synthesis capability. The DNA polymerase activity may enable DNA primase to also catalyze primer extension after primer synthesis. May also play a role in DNA repair. This Thermoplasma acidophilum (strain ATCC 25905 / DSM 1728 / JCM 9062 / NBRC 15155 / AMRC-C165) protein is DNA primase large subunit PriL.